We begin with the raw amino-acid sequence, 132 residues long: Small ribosomal subunit protein uS8 (132 aa).

This sequence belongs to the universal ribosomal protein uS8 family. Part of the 30S ribosomal subunit. Contacts proteins S5 and S12.

Its function is as follows. One of the primary rRNA binding proteins, it binds directly to 16S rRNA central domain where it helps coordinate assembly of the platform of the 30S subunit. This Bacillus pumilus (strain SAFR-032) protein is Small ribosomal subunit protein uS8.